We begin with the raw amino-acid sequence, 513 residues long: Acetylcholine receptor subunit delta (513 aa).

The signal sequence occupies residues 1-18 (MAVLLALFGALVLSGGLC). Residues 19–244 (VNQEERLIHH…ITFYLIIKRK (226 aa)) lie on the Extracellular side of the membrane. N-linked (GlcNAc...) asparagine glycans are attached at residues N88 and N161. A disulfide bridge links C148 with C162. 3 helical membrane-spanning segments follow: residues 245 to 269 (PLFY…VFYL), 277 to 295 (MTLV…LLVS), and 311 to 332 (YLLF…VLNF). The Cytoplasmic segment spans residues 333–467 (HFRTPSTHVM…WNRVARTLDR (135 aa)). Y388 bears the Phosphotyrosine; by Tyr-kinases mark. Residues 468 to 490 (LCLFLITPMLVVGTLWIFLMGIY) traverse the membrane as a helical segment.

The protein belongs to the ligand-gated ion channel (TC 1.A.9) family. Acetylcholine receptor (TC 1.A.9.1) subfamily. Pentamer of two alpha chains, and one each of the beta, delta, and gamma chains.

It localises to the postsynaptic cell membrane. Its subcellular location is the cell membrane. It catalyses the reaction K(+)(in) = K(+)(out). The enzyme catalyses Na(+)(in) = Na(+)(out). Functionally, after binding acetylcholine, the AChR responds by an extensive change in conformation that affects all subunits and leads to opening of an ion-conducting channel across the plasma membrane. The chain is Acetylcholine receptor subunit delta (CHRND) from Gallus gallus (Chicken).